The chain runs to 159 residues: NADH-quinone oxidoreductase subunit I (159 aa).

2 4Fe-4S ferredoxin-type domains span residues 50–80 (QRRY…IESE) and 90–119 (KRYD…ETHI). [4Fe-4S] cluster is bound by residues Cys-60, Cys-63, Cys-66, Cys-70, Cys-99, Cys-102, Cys-105, and Cys-109.

The protein belongs to the complex I 23 kDa subunit family. In terms of assembly, NDH-1 is composed of 14 different subunits. Subunits NuoA, H, J, K, L, M, N constitute the membrane sector of the complex. It depends on [4Fe-4S] cluster as a cofactor.

It is found in the cell inner membrane. It carries out the reaction a quinone + NADH + 5 H(+)(in) = a quinol + NAD(+) + 4 H(+)(out). In terms of biological role, NDH-1 shuttles electrons from NADH, via FMN and iron-sulfur (Fe-S) centers, to quinones in the respiratory chain. The immediate electron acceptor for the enzyme in this species is believed to be ubiquinone. Couples the redox reaction to proton translocation (for every two electrons transferred, four hydrogen ions are translocated across the cytoplasmic membrane), and thus conserves the redox energy in a proton gradient. This chain is NADH-quinone oxidoreductase subunit I, found in Neisseria meningitidis serogroup A / serotype 4A (strain DSM 15465 / Z2491).